A 261-amino-acid chain; its full sequence is 3-hydroxyacyl-CoA dehydrogenase type-2 (261 aa).

Residue Ala-2 is modified to N-acetylalanine. NAD(+) contacts are provided by Ser-20, Leu-22, and Asp-41. Position 53 is an N6-acetyllysine; alternate (Lys-53). Lys-53 carries the N6-succinyllysine; alternate modification. Residues Asp-64 and Val-65 each contribute to the NAD(+) site. Residue Lys-69 is modified to N6-acetyllysine. Cys-91 lines the NAD(+) pocket. 2 positions are modified to N6-acetyllysine: Lys-99 and Lys-105. Ser-155 lines the substrate pocket. The NAD(+) site is built by Tyr-168, Lys-172, Phe-201, and Thr-203. The active-site Proton acceptor is Tyr-168. An N6-acetyllysine; alternate modification is found at Lys-212. Position 212 is an N6-succinyllysine; alternate (Lys-212).

This sequence belongs to the short-chain dehydrogenases/reductases (SDR) family. In terms of assembly, homotetramer. Component of mitochondrial ribonuclease P, a complex composed of TRMT10C/MRPP1, HSD17B10/MRPP2 and PRORP/MRPP3. Interacts with TRMT10C/MRPP1; forming the MRPP1-MRPP2 subcomplex of the mitochondrial ribonuclease P complex. In terms of tissue distribution, ubiquitously expressed in normal tissues but is overexpressed in neurons affected in AD.

The protein localises to the mitochondrion. It localises to the mitochondrion matrix. The protein resides in the mitochondrion nucleoid. The catalysed reaction is a (3S)-3-hydroxyacyl-CoA + NAD(+) = a 3-oxoacyl-CoA + NADH + H(+). It catalyses the reaction (2S,3S)-3-hydroxy-2-methylbutanoyl-CoA + NAD(+) = 2-methyl-3-oxobutanoyl-CoA + NADH + H(+). It carries out the reaction testosterone + NAD(+) = androst-4-ene-3,17-dione + NADH + H(+). The enzyme catalyses 5alpha-androstane-3alpha,17beta-diol + NAD(+) = 17beta-hydroxy-5alpha-androstan-3-one + NADH + H(+). The catalysed reaction is 17beta-estradiol + NAD(+) = estrone + NADH + H(+). It catalyses the reaction cholate + NAD(+) = 3alpha,12alpha-dihydroxy-7-oxo-5beta-cholanate + NADH + H(+). It carries out the reaction (3S)-3-hydroxybutanoyl-CoA + NAD(+) = acetoacetyl-CoA + NADH + H(+). The enzyme catalyses (3S)-hydroxyoctanoyl-CoA + NAD(+) = 3-oxooctanoyl-CoA + NADH + H(+). The catalysed reaction is (3S)-hydroxyhexadecanoyl-CoA + NAD(+) = 3-oxohexadecanoyl-CoA + NADH + H(+). It catalyses the reaction 17beta-hydroxy-5alpha-androstan-3-one + NAD(+) = 5alpha-androstan-3,17-dione + NADH + H(+). It carries out the reaction 5alpha-pregnan-20beta-ol-3-one + NAD(+) = 5alpha-pregnane-3,20-dione + NADH + H(+). The enzyme catalyses 3alpha-hydroxy-5alpha-pregnan-20-one + NAD(+) = 5alpha-pregnane-3,20-dione + NADH + H(+). The catalysed reaction is cortisone + NAD(+) = 17alpha-hydroxypregn-4-en-3,11,20-trione-21-al + NADH + H(+). It catalyses the reaction 11-dehydrocorticosterone + NAD(+) = pregn-4-ene-3,11,20,21-tetraone + NADH + H(+). It carries out the reaction cortisol + NAD(+) = 11beta,17alpha-dihydroxypregn-4-ene-3,20,21-trione + NADH + H(+). The enzyme catalyses chenodeoxycholate + NAD(+) = 7-oxolithocholate + NADH + H(+). The catalysed reaction is ursodeoxycholate + NAD(+) = 7-oxolithocholate + NADH + H(+). It catalyses the reaction 3beta,7beta-dihydroxy-5beta-cholan-24-oate + NAD(+) = 3beta-hydroxy-7-oxo-5beta-cholan-24-oate + NADH + H(+). It participates in amino-acid degradation; L-isoleucine degradation. The protein operates within lipid metabolism; fatty acid beta-oxidation. It functions in the pathway steroid metabolism. Its pathway is lipid metabolism; bile acid biosynthesis. Its activity is regulated as follows. The phospholipase C-like activity toward cardiolipin is inhibited by amyloid-beta peptide. Functionally, mitochondrial dehydrogenase involved in pathways of fatty acid, branched-chain amino acid and steroid metabolism. Acts as (S)-3-hydroxyacyl-CoA dehydrogenase in mitochondrial fatty acid beta-oxidation, a major degradation pathway of fatty acids. Catalyzes the third step in the beta-oxidation cycle, namely the reversible conversion of (S)-3-hydroxyacyl-CoA to 3-ketoacyl-CoA. Preferentially accepts straight medium- and short-chain acyl-CoA substrates with highest efficiency for (3S)-hydroxybutanoyl-CoA. Acts as 3-hydroxy-2-methylbutyryl-CoA dehydrogenase in branched-chain amino acid catabolic pathway. Catalyzes the oxidation of 3-hydroxy-2-methylbutanoyl-CoA into 2-methyl-3-oxobutanoyl-CoA, a step in isoleucine degradation pathway. Has hydroxysteroid dehydrogenase activity toward steroid hormones and bile acids. Catalyzes the oxidation of 3alpha-, 17beta-, 20beta- and 21-hydroxysteroids and 7alpha- and 7beta-hydroxy bile acids. Oxidizes allopregnanolone/brexanolone at the 3alpha-hydroxyl group, which is known to be critical for the activation of gamma-aminobutyric acid receptors (GABAARs) chloride channel. Has phospholipase C-like activity toward cardiolipin and its oxidized species. Likely oxidizes the 2'-hydroxyl in the head group of cardiolipin to form a ketone intermediate that undergoes nucleophilic attack by water and fragments into diacylglycerol, dihydroxyacetone and orthophosphate. Has higher affinity for cardiolipin with oxidized fatty acids and may degrade these species during the oxidative stress response to protect cells from apoptosis. By interacting with intracellular amyloid-beta, it may contribute to the neuronal dysfunction associated with Alzheimer disease (AD). Essential for structural and functional integrity of mitochondria. In terms of biological role, in addition to mitochondrial dehydrogenase activity, moonlights as a component of mitochondrial ribonuclease P, a complex that cleaves tRNA molecules in their 5'-ends. Together with TRMT10C/MRPP1, forms a subcomplex of the mitochondrial ribonuclease P, named MRPP1-MRPP2 subcomplex, which displays functions that are independent of the ribonuclease P activity. The MRPP1-MRPP2 subcomplex catalyzes the formation of N(1)-methylguanine and N(1)-methyladenine at position 9 (m1G9 and m1A9, respectively) in tRNAs; HSD17B10/MRPP2 acting as a non-catalytic subunit. The MRPP1-MRPP2 subcomplex also acts as a tRNA maturation platform: following 5'-end cleavage by the mitochondrial ribonuclease P complex, the MRPP1-MRPP2 subcomplex enhances the efficiency of 3'-processing catalyzed by ELAC2, retains the tRNA product after ELAC2 processing and presents the nascent tRNA to the mitochondrial CCA tRNA nucleotidyltransferase TRNT1 enzyme. Associates with mitochondrial DNA complexes at the nucleoids to initiate RNA processing and ribosome assembly. This Homo sapiens (Human) protein is 3-hydroxyacyl-CoA dehydrogenase type-2 (HSD17B10).